Here is a 398-residue protein sequence, read N- to C-terminus: Succinate--CoA ligase [ADP-forming] subunit beta (398 aa).

An ATP-grasp domain is found at 9–254 (KALLHEFGVP…ETEEDAKEIE (246 aa)). Residues K46, 53 to 55 (GRG), E109, S112, and E117 contribute to the ATP site. Positions 209 and 223 each coordinate Mg(2+). Residues N274 and 331 to 333 (GIM) each bind substrate.

This sequence belongs to the succinate/malate CoA ligase beta subunit family. Heterotetramer of two alpha and two beta subunits. Mg(2+) is required as a cofactor.

It carries out the reaction succinate + ATP + CoA = succinyl-CoA + ADP + phosphate. It catalyses the reaction GTP + succinate + CoA = succinyl-CoA + GDP + phosphate. It participates in carbohydrate metabolism; tricarboxylic acid cycle; succinate from succinyl-CoA (ligase route): step 1/1. Its function is as follows. Succinyl-CoA synthetase functions in the citric acid cycle (TCA), coupling the hydrolysis of succinyl-CoA to the synthesis of either ATP or GTP and thus represents the only step of substrate-level phosphorylation in the TCA. The beta subunit provides nucleotide specificity of the enzyme and binds the substrate succinate, while the binding sites for coenzyme A and phosphate are found in the alpha subunit. In Bradyrhizobium sp. (strain BTAi1 / ATCC BAA-1182), this protein is Succinate--CoA ligase [ADP-forming] subunit beta.